Reading from the N-terminus, the 883-residue chain is uncharacterized protein (883 aa).

The interval 258-373 (INNQSDNQSN…NQFNKPDNEP (116 aa)) is disordered. 3 stretches are compositionally biased toward low complexity: residues 259–268 (NNQSDNQSNS), 277–317 (EPNG…SNSE), and 324–333 (NEPNTEPNTE). A compositionally biased stretch (polar residues) spans 334–347 (SNGQSNSELNNQSD). A compositionally biased stretch (low complexity) spans 348–368 (NHPNNEPNSEPNNEPNNQFNK).

This sequence belongs to the mimivirus L137 family.

This is an uncharacterized protein from Acanthamoeba polyphaga mimivirus (APMV).